The following is a 588-amino-acid chain: Aspartate--tRNA ligase (588 aa).

Glutamate 172 provides a ligand contact to L-aspartate. Residues 196 to 199 form an aspartate region; it reads QLFK. Arginine 218 serves as a coordination point for L-aspartate. ATP-binding positions include 218-220 and glutamine 227; that span reads RDE. Histidine 449 contributes to the L-aspartate binding site. Glutamate 483 lines the ATP pocket. Position 490 (arginine 490) interacts with L-aspartate. Position 535–538 (535–538) interacts with ATP; the sequence is GLDR.

The protein belongs to the class-II aminoacyl-tRNA synthetase family. Type 1 subfamily. Homodimer.

The protein resides in the cytoplasm. The catalysed reaction is tRNA(Asp) + L-aspartate + ATP = L-aspartyl-tRNA(Asp) + AMP + diphosphate. Its function is as follows. Catalyzes the attachment of L-aspartate to tRNA(Asp) in a two-step reaction: L-aspartate is first activated by ATP to form Asp-AMP and then transferred to the acceptor end of tRNA(Asp). The sequence is that of Aspartate--tRNA ligase from Haemophilus influenzae (strain ATCC 51907 / DSM 11121 / KW20 / Rd).